Consider the following 375-residue polypeptide: uncharacterized protein (375 aa).

Belongs to the mimivirus L17x/L18x family.

This is an uncharacterized protein from Acanthamoeba polyphaga (Amoeba).